The primary structure comprises 166 residues: Thiol peroxidase (166 aa).

One can recognise a Thioredoxin domain in the interval 18 to 166 (LKVGDKAPDV…NYEALLKVLK (149 aa)). Catalysis depends on Cys60, which acts as the Cysteine sulfenic acid (-SOH) intermediate. An intrachain disulfide couples Cys60 to Cys94.

Belongs to the peroxiredoxin family. Tpx subfamily. In terms of assembly, homodimer.

It catalyses the reaction a hydroperoxide + [thioredoxin]-dithiol = an alcohol + [thioredoxin]-disulfide + H2O. In terms of biological role, thiol-specific peroxidase that catalyzes the reduction of hydrogen peroxide and organic hydroperoxides to water and alcohols, respectively. Plays a role in cell protection against oxidative stress by detoxifying peroxides. This is Thiol peroxidase from Helicobacter pylori (strain ATCC 700392 / 26695) (Campylobacter pylori).